The following is a 155-amino-acid chain: Interleukin-2 (155 aa).

The first 20 residues, 1-20, serve as a signal peptide directing secretion; it reads MYKIQLLSCIALTLALVANG. An O-linked (GalNAc...) threonine glycan is attached at Thr-23. Residues Cys-79 and Cys-127 are joined by a disulfide bond.

The protein belongs to the IL-2 family.

The protein localises to the secreted. In terms of biological role, cytokine produced by activated CD4-positive helper T-cells and to a lesser extend activated CD8-positive T-cells and natural killer (NK) cells that plays pivotal roles in the immune response and tolerance. Binds to a receptor complex composed of either the high-affinity trimeric IL-2R (IL2RA/CD25, IL2RB/CD122 and IL2RG/CD132) or the low-affinity dimeric IL-2R (IL2RB and IL2RG). Interaction with the receptor leads to oligomerization and conformation changes in the IL-2R subunits resulting in downstream signaling starting with phosphorylation of JAK1 and JAK3. In turn, JAK1 and JAK3 phosphorylate the receptor to form a docking site leading to the phosphorylation of several substrates including STAT5. This process leads to activation of several pathways including STAT, phosphoinositide-3-kinase/PI3K and mitogen-activated protein kinase/MAPK pathways. Functions as a T-cell growth factor and can increase NK-cell cytolytic activity as well. Promotes strong proliferation of activated B-cells and subsequently immunoglobulin production. Plays a pivotal role in regulating the adaptive immune system by controlling the survival and proliferation of regulatory T-cells, which are required for the maintenance of immune tolerance. Moreover, participates in the differentiation and homeostasis of effector T-cell subsets, including Th1, Th2, Th17 as well as memory CD8-positive T-cells. This is Interleukin-2 (IL2) from Bos taurus (Bovine).